A 106-amino-acid polypeptide reads, in one-letter code: Large ribosomal subunit protein uL24 (106 aa).

This sequence belongs to the universal ribosomal protein uL24 family. In terms of assembly, part of the 50S ribosomal subunit.

One of two assembly initiator proteins, it binds directly to the 5'-end of the 23S rRNA, where it nucleates assembly of the 50S subunit. Its function is as follows. One of the proteins that surrounds the polypeptide exit tunnel on the outside of the subunit. The sequence is that of Large ribosomal subunit protein uL24 from Polaromonas naphthalenivorans (strain CJ2).